We begin with the raw amino-acid sequence, 320 residues long: Mycothiol acetyltransferase (320 aa).

N-acetyltransferase domains lie at 8-141 (SHLT…RSLR) and 152-320 (LQIR…AALA). Glutamate 36 lines the 1D-myo-inositol 2-(L-cysteinylamino)-2-deoxy-alpha-D-glucopyranoside pocket. Residues 80–82 (LVV) and 88–93 (RRGIAT) contribute to the acetyl-CoA site. 1D-myo-inositol 2-(L-cysteinylamino)-2-deoxy-alpha-D-glucopyranoside is bound by residues glutamate 179, lysine 229, and glutamate 239. Acetyl-CoA-binding positions include 243-245 (LGV) and 250-256 (QGRGLGR). Tyrosine 284 is a binding site for 1D-myo-inositol 2-(L-cysteinylamino)-2-deoxy-alpha-D-glucopyranoside. 289-294 (NIAAVR) is an acetyl-CoA binding site.

This sequence belongs to the acetyltransferase family. MshD subfamily. In terms of assembly, monomer.

It catalyses the reaction 1D-myo-inositol 2-(L-cysteinylamino)-2-deoxy-alpha-D-glucopyranoside + acetyl-CoA = mycothiol + CoA + H(+). Functionally, catalyzes the transfer of acetyl from acetyl-CoA to desacetylmycothiol (Cys-GlcN-Ins) to form mycothiol. This Mycobacterium ulcerans (strain Agy99) protein is Mycothiol acetyltransferase.